Here is a 123-residue protein sequence, read N- to C-terminus: MAKSLRSKWKRKMRAEKRKKNAPKELARLKTVLAKGSNVLMDDVKEIATVVPAKKINEKMDLDVDAPEGESSKMDTELKRNKKNLRDQHGQYPVWFNQRQQKKLKSQCGKKKGKSKQAKKLAW.

Basic residues predominate over residues Met-1–Asn-21. Disordered stretches follow at residues Met-1–Ala-22 and Asp-61–Trp-123. Residues Glu-70 to His-89 are compositionally biased toward basic and acidic residues. Residues Gln-100–Trp-123 show a composition bias toward basic residues.

It belongs to the learning-associated protein family.

Its subcellular location is the nucleus. It localises to the nucleolus. It is found in the chromosome. Regulates dendritic and spine growth and synaptic transmission. This chain is Protein LLP homolog (llph), found in Xenopus laevis (African clawed frog).